Consider the following 66-residue polypeptide: Conotoxin Lt5.6 (66 aa).

Residues 1–19 form the signal peptide; it reads MLCLPVFIILLLLASPAAP. A propeptide spanning residues 20–54 is cleaved from the precursor; that stretch reads KSLETRIQNDLIRAGLTDADLKTEKGFLSGLLNVA.

It belongs to the conotoxin T superfamily. In terms of processing, contains 2 disulfide bonds that can be either 'C1-C3, C2-C4' or 'C1-C4, C2-C3', since these disulfide connectivities have been observed for conotoxins with cysteine framework V (for examples, see AC P0DQQ7 and AC P81755). In terms of tissue distribution, expressed by the venom duct.

Its subcellular location is the secreted. The protein is Conotoxin Lt5.6 of Conus litteratus (Lettered cone).